An 821-amino-acid chain; its full sequence is Calpain-3 (821 aa).

Positions 1 to 37 are disordered; it reads MPTVISPTVAPRTGAEPRSPGPVPHPAQGKTTEAGGG. Positions 74-417 constitute a Calpain catalytic domain; the sequence is LYLDPEFPPD…FTKLEICNLT (344 aa). Catalysis depends on residues Cys-129, His-334, and Asn-358. Residues 418 to 586 form a domain III region; that stretch reads ADALESDKLQ…KRNLSEEAEN (169 aa). Residues 587-649 form a linker region; sequence TISVDRPVKK…RPGHTDQESE (63 aa). A disordered region spans residues 603 to 651; that stretch reads IFVSDRANSNKELGVDQEAEEGKDKTGPDKQGESPQPRPGHTDQESEEQ. The segment covering 622–634 has biased composition (basic and acidic residues); that stretch reads EEGKDKTGPDKQG. EF-hand domains are found at residues 649-683, 692-725, 722-757, and 787-821; these read EEQQ…VVNK, FTLE…KKIK, KKIK…AGFH, and VRLE…TMYA. A domain IV region spans residues 650–820; sequence EQQQFRNIFR…VLEWLQLTMY (171 aa). Ca(2+) contacts are provided by Ala-662, Asp-665, Glu-667, Glu-672, Asp-705, Asp-707, Ser-709, Arg-711, Glu-716, Asp-735, Asp-737, Ser-739, Thr-741, Glu-746, Asp-800, Asp-802, Asp-804, and Ile-806.

The protein belongs to the peptidase C2 family. Homodimer; via EF-hand domain 4. Interacts with TTN/titin. Interacts with CMYA5; this interaction, which results in CMYA5 proteolysis, may protect CAPN3 from autolysis. Interacts with SIMC1. Interacts with UTP25; the interaction is required for CAPN3 translocation to the nucleolus. Skeletal muscle.

The protein localises to the cytoplasm. It is found in the nucleus. Its subcellular location is the nucleolus. The enzyme catalyses Broad endopeptidase activity.. Its activity is regulated as follows. Activated by micromolar concentrations of calcium and inhibited by calpastatin. Functionally, calcium-regulated non-lysosomal thiol-protease. Proteolytically cleaves CTBP1 at 'His-399'. Mediates, with UTP25, the proteasome-independent degradation of p53/TP53. The sequence is that of Calpain-3 (Capn3) from Rattus norvegicus (Rat).